A 172-amino-acid polypeptide reads, in one-letter code: Protein nemuri (172 aa).

The N-terminal stretch at M1 to A25 is a signal peptide. The disordered stretch occupies residues R27–A172. 3 stretches are compositionally biased toward basic and acidic residues: residues R35–S50, D58–T90, and T97–A108. Residues D45–R74 adopt a coiled-coil conformation. Residues R109–A172 show a composition bias toward basic residues.

In terms of tissue distribution, detected in the brain where it accumulates in the dorsal fan-shaped body following sleep deprivation (at protein level). Expressed in the adult body.

The protein localises to the secreted. Antimicrobial protein which is essential for the homeostatic regulation of sleep. Promotes sleep following sleep deprivation or bacterial infection and increases survival following bacterial infection. Likely to promote survival to bacterial infection in two ways; by contributing to the innate immune response and by promoting sleep during sickness to aid recovery. This is Protein nemuri from Drosophila melanogaster (Fruit fly).